An 875-amino-acid polypeptide reads, in one-letter code: Peptidyl-glycine alpha-amidating monooxygenase B (875 aa).

An N-terminal signal peptide occupies residues 1–39 (MDMASLISSLLVLFLIFQNSCYCFRSPLSVFKRYEESTR). Positions 3 to 394 (MASLISSLLV…KREEEEVLNQ (392 aa)) are peptidylglycine alpha-hydroxylating monooxygenase. The Intragranular segment spans residues 40–763 (SLSNDCLGTT…PSVVQESSAG (724 aa)). Intrachain disulfides connect Cys45/Cys184, Cys79/Cys124, Cys112/Cys129, Cys225/Cys332, and Cys291/Cys313. Positions 105 and 106 each coordinate Cu(2+). 4 residues coordinate Cu(2+): His170, His240, His242, and Met312. The interval 395–716 (DVHLEEDTDW…SPSKAEHRSV (322 aa)) is peptidyl-alpha-hydroxyglycine alpha-amidating lyase. A protein is bound at residue Arg430. Asn465 carries an N-linked (GlcNAc...) asparagine glycan. 3 NHL repeats span residues 467–508 (SKVL…VGAE), 516–561 (LGRA…FSPN), and 569–613 (GEET…FHAK). 2 cysteine pairs are disulfide-bonded: Cys530-Cys551 and Cys598-Cys609. Positions 550 and 602 each coordinate a protein. Asn662 is a glycosylation site (N-linked (GlcNAc...) asparagine). Residues 666–709 (GDILDTFIPARKNFEMPHDIAAGDDGTVYVGDAHANAVWKFSPS) form an NHL 4 repeat. Positions 735–755 (HMRSRPKTNESVGQQTQEKPS) are disordered. An N-linked (GlcNAc...) asparagine glycan is attached at Asn743. A compositionally biased stretch (polar residues) spans 743-755 (NESVGQQTQEKPS). A helical transmembrane segment spans residues 764–787 (VSFVLIITLLIIPVVVLIAIAIFI). Over 788 to 875 (RWRKVRMYGG…APPIPPVSSS (88 aa)) the chain is Cytoplasmic. The disordered stretch occupies residues 837–875 (KGFDRLSTEGSDQEKDDDDDGSDSEEEYSAPPIPPVSSS). The span at 850 to 864 (EKDDDDDGSDSEEEY) shows a compositional bias: acidic residues.

The protein in the C-terminal section; belongs to the peptidyl-alpha-hydroxyglycine alpha-amidating lyase family. It in the N-terminal section; belongs to the copper type II ascorbate-dependent monooxygenase family. Monomer. The cofactor is Zn(2+). Cu(2+) is required as a cofactor.

It localises to the cytoplasmic vesicle. The protein resides in the secretory vesicle membrane. It carries out the reaction a [peptide]-C-terminal glycine + 2 L-ascorbate + O2 = a [peptide]-C-terminal (2S)-2-hydroxyglycine + 2 monodehydro-L-ascorbate radical + H2O. It catalyses the reaction a [peptide]-C-terminal (2S)-2-hydroxyglycine = a [peptide]-C-terminal amide + glyoxylate. Its function is as follows. Bifunctional enzyme that catalyzes amidation of the C-terminus of proteins. Alpha-amidation is present at the C-terminus of many endocrine hormones and neuropeptides and is required for their activity. C-terminal amidation also takes place in response to protein fragmentation triggered by oxidative stress, promoting degradation of amidated protein fragments by the proteasome. Alpha-amidation involves two sequential reactions, both of which are catalyzed by separate catalytic domains of the enzyme. The first step, catalyzed by peptidyl alpha-hydroxylating monooxygenase (PHM) domain, is the copper-, ascorbate-, and O2- dependent stereospecific hydroxylation (with S stereochemistry) at the alpha-carbon (C-alpha) of the C-terminal glycine of the peptidylglycine substrate. The second step, catalyzed by the peptidylglycine amidoglycolate lyase (PAL) domain, is the zinc-dependent cleavage of the N-C-alpha bond, producing the alpha-amidated peptide and glyoxylate. The protein is Peptidyl-glycine alpha-amidating monooxygenase B (pam-b) of Xenopus laevis (African clawed frog).